Here is a 136-residue protein sequence, read N- to C-terminus: Large ribosomal subunit protein uL16 (136 aa).

This sequence belongs to the universal ribosomal protein uL16 family. Part of the 50S ribosomal subunit.

In terms of biological role, binds 23S rRNA and is also seen to make contacts with the A and possibly P site tRNAs. The polypeptide is Large ribosomal subunit protein uL16 (Mannheimia succiniciproducens (strain KCTC 0769BP / MBEL55E)).